An 80-amino-acid polypeptide reads, in one-letter code: Putative membrane protein insertion efficiency factor (80 aa).

Belongs to the UPF0161 family.

The protein resides in the cell membrane. Its function is as follows. Could be involved in insertion of integral membrane proteins into the membrane. The protein is Putative membrane protein insertion efficiency factor of Corynebacterium jeikeium (strain K411).